Here is a 276-residue protein sequence, read N- to C-terminus: Outer membrane lipoprotein 2 (276 aa).

Residues 1-19 form the signal peptide; that stretch reads MNFKKLLGVALVSALALTA. The N-palmitoyl cysteine moiety is linked to residue C20. The S-diacylglycerol cysteine moiety is linked to residue C20.

This sequence belongs to the NlpA lipoprotein family.

It is found in the cell outer membrane. The chain is Outer membrane lipoprotein 2 (plpB) from Mannheimia haemolytica (Pasteurella haemolytica).